We begin with the raw amino-acid sequence, 370 residues long: Acyl-CoA:lysophosphatidylglycerol acyltransferase 1 (370 aa).

The chain crosses the membrane as a helical span at residues 22-42 (FAFMVANNLVAIPSYICYVII). Residues 101 to 106 (HQATGD) carry the HXXXXD motif motif. A helical transmembrane segment spans residues 342–362 (MWIFLIQSFAFLSGYLWYHII).

This sequence belongs to the 1-acyl-sn-glycerol-3-phosphate acyltransferase family. Ubiquitous. Expressed in heart, kidney, liver, skin, intestine, and thymus. Highest expression is detected in brain and testis.

The protein localises to the endoplasmic reticulum membrane. It catalyses the reaction a 2-acyl-sn-glycero-3-phosphoethanolamine + octadecanoyl-CoA = 1-octadecanoyl-2-acyl-sn-glycero-3-phosphoethanolamine + CoA. The catalysed reaction is 2-(9Z-octadecenoyl)-sn-glycero-3-phosphoethanolamine + octadecanoyl-CoA = 1-octadecanoyl-2-(9Z-octadecenoyl)-sn-glycero-3-phosphoethanolamine + CoA. It carries out the reaction a 2-acyl-sn-glycero-3-phosphoethanolamine + hexadecanoyl-CoA = 1-hexadecanoyl-2-acyl-sn-glycero-3-phosphoethanolamine + CoA. The enzyme catalyses 2-(9Z-octadecenoyl)-sn-glycero-3-phosphoethanolamine + hexadecanoyl-CoA = 1-hexadecanoyl-2-(9Z-octadecenoyl)-sn-glycero-3-phosphoethanolamine + CoA. It catalyses the reaction 1-tetradecanoyl-sn-glycero-3-phospho-(1'-sn-glycerol) + hexadecanoyl-CoA = 1-tetradecanoyl-2-hexadecanoyl-sn-glycero-3-phospho-(1'-sn-glycerol) + CoA. The catalysed reaction is 1-hexadecanoyl-sn-glycero-3-phospho-(1'-sn-glycerol) + dodecanoyl-CoA = 1-hexadecanoyl-2-dodecanoyl-sn-glycero-3-phospho-(1'-sn-glycerol) + CoA. It carries out the reaction 1-hexadecanoyl-sn-glycero-3-phospho-(1'-sn-glycerol) + hexadecanoyl-CoA = 1,2-dihexadecanoyl-sn-glycero-3-phospho-(1'-sn-glycerol) + CoA. The enzyme catalyses 1-hexadecanoyl-sn-glycero-3-phospho-(1'-sn-glycerol) + octadecanoyl-CoA = 1-hexadecanoyl-2-octadecanoyl-sn-glycero-3-phospho-(1'-sn-glycerol) + CoA. It catalyses the reaction 1-octadecanoyl-sn-glycero-3-phospho-(1'-sn-glycerol) + hexadecanoyl-CoA = 1-octadecanoyl-2-hexadecanoyl-sn-glycero-3-phospho-(1'-sn-glycerol) + CoA. The catalysed reaction is 1-(9Z-octadecenoyl)-sn-glycero-3-phospho-(1'-sn-glycerol) + dodecanoyl-CoA = 1-(9Z-octadecenoyl)-2-dodecanoyl-sn-glycero-3-phospho-(1'-sn-glycerol) + CoA. It carries out the reaction 1-hexadecanoyl-sn-glycero-3-phospho-(1'-sn-glycerol) + (9Z)-octadecenoyl-CoA = 1-hexadecanoyl-2-(9Z-octadecenoyl)-sn-glycero-3-phospho-(1'-sn-glycerol) + CoA. The enzyme catalyses 1-(9Z-octadecenoyl)-sn-glycero-3-phospho-(1'-sn-glycerol) + hexadecanoyl-CoA = 1-(9Z-octadecenoyl)-2-hexadecanoyl-sn-glycero-3-phospho-(1'-sn-glycerol) + CoA. It catalyses the reaction 1-(9Z-octadecenoyl)-sn-glycero-3-phospho-(1'-sn-glycerol) + (9Z)-octadecenoyl-CoA = 1,2-di-(9Z-octadecenoyl)-sn-glycero-3-phospho-(1'-sn-glycerol) + CoA. The catalysed reaction is a 2-acylglycerol + an acyl-CoA = a 1,2-diacylglycerol + CoA. It carries out the reaction a 2-acylglycerol + hexadecanoyl-CoA = a 1-hexadecanoyl-2-acylglycerol + CoA. The enzyme catalyses a 1-acylglycerol + hexadecanoyl-CoA = an hexadecanoyl-acylglycerol + CoA. It catalyses the reaction a 2-acyl-sn-glycero-3-phosphocholine + an acyl-CoA = a 1,2-diacyl-sn-glycero-3-phosphocholine + CoA. The catalysed reaction is 2-(9Z-octadecenoyl)-sn-glycero-3-phosphocholine + octadecanoyl-CoA = 1-octadecanoyl-2-(9Z-octadecenoyl)-sn-glycero-3-phosphocholine + CoA. It carries out the reaction 2-(9Z,12Z-octadecadienoyl)-sn-glycero-3-phosphocholine + octadecanoyl-CoA = 1-octadecanoyl-2-(9Z,12Z)-octadecadienoyl-sn-glycero-3-phosphocholine + CoA. The enzyme catalyses 2-(5Z,8Z,11Z,14Z)-eicosatetraenoyl-sn-glycero-3-phosphocholine + octadecanoyl-CoA = 1-octadecanoyl-2-(5Z,8Z,11Z,14Z-eicosatetraenoyl)-sn-glycero-3-phosphocholine + CoA. It catalyses the reaction 2-(9Z-octadecenoyl)-sn-glycero-3-phosphocholine + hexadecanoyl-CoA = 1-hexadecanoyl-2-(9Z-octadecenoyl)-sn-glycero-3-phosphocholine + CoA. The catalysed reaction is 2-(9Z-octadecenoyl)-sn-glycero-3-phospho-L-serine + hexadecanoyl-CoA = 1-hexadecanoyl-2-(9Z-octadecenoyl)-sn-glycero-3-phospho-L-serine + CoA. It carries out the reaction 2-(4Z,7Z,10Z,13Z,16Z,19Z-docosahexaenoyl)-sn-glycero-3-phosphocholine + octadecanoyl-CoA = 1-octadecanoyl-2-(4Z,7Z,10Z,13Z,16Z,19Z-docosahexaenoyl)-sn-glycero-3-phosphocholine + CoA. The enzyme catalyses 1-(9Z-octadecenoyl)-sn-glycero-3-phospho-L-serine + octadecanoyl-CoA = 1-(9Z-octadecenoyl)-2-octadecanoyl-sn-glycero-3-phospho-L-serine + CoA. It catalyses the reaction a 2-acyl-sn-glycero-3-phosphoethanolamine + a fatty acyl-CoA = a 1,2-diacyl-sn-glycero-3-phosphoethanolamine + CoA. Its function is as follows. Lysophospholipid acyltransferase involved in fatty acyl chain remodeling of glycerophospholipids in the endoplasmic reticulum membrane. Selectively catalyzes the transfer and esterification of saturated long-chain fatty acids from acyl-CoA to the sn-1 position of 1-lyso-2-acyl phosphatidylethanolamines (1-lyso-PE, LPE), with a preference for stearoyl CoA over palmitoyl CoA as acyl donor. Acts in concert with an unknown phospholipase A1 to convert palmitate PE species into stearate ones. Provides substrates to the PE methylation pathway, controlling stearate/palmitate composition of PE and phosphatidylcholine (PC) species with an overall impact on de novo hepatic lipid synthesis, body fat content and life span. Can acylate lysophosphatidylglycerols (LPG) using various saturated fatty acyl-CoAs as acyl donors. Can also acylate monoacylglycerols with a preference for 2-monoacylglycerols over 1-monoacylglycerols. Has no activity toward lysophosphatidic acids (LPA) and lysophosphatidylcholines (LPC). The sequence is that of Acyl-CoA:lysophosphatidylglycerol acyltransferase 1 from Mus musculus (Mouse).